We begin with the raw amino-acid sequence, 215 residues long: Adenylate kinase (215 aa).

10 to 15 (GAGKGT) serves as a coordination point for ATP. An NMP region spans residues 30–59 (STGDMLRAAVKAETELGLKAKSVMDSGGLV). AMP contacts are provided by residues T31, R36, 57–59 (GLV), 85–88 (GFPR), and Q92. Positions 122 to 159 (GRRVHEGSGRIYHTIFNPPKVECIDDVTGEPLLQRKDD) are LID. ATP contacts are provided by residues R123 and 132 to 133 (IY). The AMP site is built by R156 and R167. ATP is bound at residue G201.

It belongs to the adenylate kinase family. In terms of assembly, monomer.

It localises to the cytoplasm. The enzyme catalyses AMP + ATP = 2 ADP. It functions in the pathway purine metabolism; AMP biosynthesis via salvage pathway; AMP from ADP: step 1/1. Catalyzes the reversible transfer of the terminal phosphate group between ATP and AMP. Plays an important role in cellular energy homeostasis and in adenine nucleotide metabolism. The polypeptide is Adenylate kinase (Pseudomonas savastanoi pv. phaseolicola (strain 1448A / Race 6) (Pseudomonas syringae pv. phaseolicola (strain 1448A / Race 6))).